Reading from the N-terminus, the 180-residue chain is Small ribosomal subunit protein uS4 (180 aa).

The 63-residue stretch at 104–166 (RRLQTIVHRK…PTSPFKNNPP (63 aa)) folds into the S4 RNA-binding domain. Residues 155–180 (FYPTSPFKNNPPTAGQGEVNVEQKGN) are disordered.

The protein belongs to the universal ribosomal protein uS4 family. Part of the 30S ribosomal subunit. Contacts protein S5. The interaction surface between S4 and S5 is involved in control of translational fidelity.

In terms of biological role, one of the primary rRNA binding proteins, it binds directly to 16S rRNA where it nucleates assembly of the body of the 30S subunit. With S5 and S12 plays an important role in translational accuracy. This is Small ribosomal subunit protein uS4 from Metallosphaera sedula (strain ATCC 51363 / DSM 5348 / JCM 9185 / NBRC 15509 / TH2).